Here is a 163-residue protein sequence, read N- to C-terminus: Small ribosomal subunit protein uS9 (163 aa).

A compositionally biased stretch (polar residues) spans 1-11; sequence MAENTNDSQVV. Residues 1 to 40 are disordered; sequence MAENTNDSQVVETEEELTNYTTETNAGAGTGTSAIEPGYG. The span at 18–27 shows a compositional bias: low complexity; that stretch reads TNYTTETNAG.

It belongs to the universal ribosomal protein uS9 family.

The protein is Small ribosomal subunit protein uS9 of Bifidobacterium longum (strain DJO10A).